We begin with the raw amino-acid sequence, 355 residues long: Protein DVR-1 (355 aa).

Positions 1–15 (MFLVLLRACLLTLSL) are cleaved as a signal peptide. The propeptide occupies 16–240 (CSPAEDDGLV…PLQCRSRRKR (225 aa)). 3 N-linked (GlcNAc...) asparagine glycosylation sites follow: Asn108, Asn179, and Asn296. 3 cysteine pairs are disulfide-bonded: Cys254/Cys320, Cys283/Cys352, and Cys287/Cys354.

This sequence belongs to the TGF-beta family. As to quaternary structure, homodimer. As to expression, abundant in ovaries and eggs, and equally distributed among all blastomeres.

It is found in the secreted. Serves to facilitate the differentiation of either mesoderm or endoderm either as a cofactor in an instructive signal or by providing permissive environment. The protein is Protein DVR-1 (dvr1) of Danio rerio (Zebrafish).